Here is a 155-residue protein sequence, read N- to C-terminus: MKTYSAKPSEIEKKWWVIDAKNVVLGRLASRVANMLRGKHKPSFTPHMDCGDNIIIINAEHVTLTGKKANPKDGKIYYRHTGFPGGIKDTTAGKILSGKHPERVIKMAVKRMITRNALGAKQMSNLYIYANSEHPHAGQQPVVYDFASQNPKNKK.

This sequence belongs to the universal ribosomal protein uL13 family. Part of the 50S ribosomal subunit.

In terms of biological role, this protein is one of the early assembly proteins of the 50S ribosomal subunit, although it is not seen to bind rRNA by itself. It is important during the early stages of 50S assembly. The protein is Large ribosomal subunit protein uL13 of Rickettsia bellii (strain OSU 85-389).